A 102-amino-acid chain; its full sequence is Acid shock protein (102 aa).

An N-terminal signal peptide occupies residues 1–21 (MKKVLALVVAAAMGLSSAAFA). Over residues 21–41 (AAETTTTPAPTATTTKAAPAK) the composition is skewed to low complexity. A disordered region spans residues 21-102 (AAETTTTPAP…PAKPAAQPAA (82 aa)). A propeptide spanning residues 22–58 (AETTTTPAPTATTTKAAPAKTTHHKKQHKAAPAQKAQ) is cleaved from the precursor. The segment covering 80-90 (AAKKHAKKHSH) has biased composition (basic residues). Residues 91–102 (QQPAKPAAQPAA) are compositionally biased toward low complexity.

This sequence belongs to the Asr family. Proteolytic processing gives rise to the active protein.

Its subcellular location is the periplasm. Functionally, required for growth and/or survival at acidic conditions. This Escherichia coli (strain K12 / MC4100 / BW2952) protein is Acid shock protein.